The chain runs to 285 residues: Dioxygenase andF (285 aa).

Residues H128, D130, and H205 each contribute to the Fe cation site.

Belongs to the PhyH family. Homodimer. Requires Fe cation as cofactor.

It participates in secondary metabolite biosynthesis; terpenoid biosynthesis. In terms of biological role, dioxygenase; part of the gene cluster that mediates the biosynthesis of anditomin, a fungal meroterpenoid. The first step of the pathway is the synthesis of 3,5-dimethylorsellinic acid (DMOA) by the polyketide synthase andM. DMOA is then converted to the phthalide compound 5,7-dihydroxy-4,6-dimethylphthalide (DHDMP) by the cytochrome P450 monooxygenase andK, which is further prenylated by the prenyltransferase andD to yield farnesyl-DHDMP. Further epoxidation by the FAD-dependent monooxygenase andE leads to epoxyfarnesyl-DHDMP. The next step involves the terpene cyclase andB that converts epoxyfarnesyl-DHDMP into preandiloid A through opening of the epoxide ring followed by the cyclization of the farnesyl moiety. Preandiloid A is in turn oxidized at the C-3 hydroxyl group to yield preandiloid B by the dehydrogenase andC. The dioxygenase andA is solely responsible for the dehydrogenation of preandiloid B leading to the enone preandiloid C, as well as for the intriguing structural rearrangement to generate the bicyclo[2.2.2]octane core, transforming preandiloid C into andiconin. FAD-binding monooxygenase andJ then produces andilesin D which is reduced by dehydrogenase andI to yield andilesin A. Action of acetyltransferase andG followed by a spontaneous acetate elimination leads then to andilesin B, which is in turn substrate of the short chain dehydrogenase andH to yield andilesin C. Finally, the dioxygenase andF catalyzes the transformation of andilesin C to anditomin. This is Dioxygenase andF from Emericella variicolor (Aspergillus stellatus).